The sequence spans 314 residues: Synaptophysin (314 aa).

Residues 1-25 (MLLLADMDVVNQLVAGGQFRVVKEP) lie on the Cytoplasmic side of the membrane. Positions 21–228 (VVKEPLGFVK…NLWFVFKETG (208 aa)) constitute an MARVEL domain. The helical transmembrane segment at 26 to 49 (LGFVKVLQWVFAIFAFATCGSYTG) threads the bilayer. Over 50-107 (ELRLSVECANKTESALNIEVEFEYPFRLHQVYFDAPSCVKGGTTKIFLVGDYSSSAEF) the chain is Vesicular. N-linked (GlcNAc...) asparagine glycosylation is present at N59. At Y81 the chain carries Phosphotyrosine. A helical membrane pass occupies residues 108-131 (FVTVAVFAFLYSMGALATYIFLQN). Residues 132 to 138 (KYRENNK) are Cytoplasmic-facing. A helical transmembrane segment spans residues 139–162 (GPMMDFLATAVFAFMWLVSSSAWA). The Vesicular segment spans residues 163–200 (KGLSDVKMATDPENIIKEMPMCRQTGNTCKELRDPVTS). Residues 201–224 (GLNTSVVFGFLNLVLWVGNLWFVF) form a helical membrane-spanning segment. Residues 225 to 314 (KETGWAAPFM…GAPTSFSNQM (90 aa)) are Cytoplasmic-facing. T227 is subject to Phosphothreonine. A disordered region spans residues 239–314 (GAPEKQPAPG…GAPTSFSNQM (76 aa)). A compositionally biased stretch (gly residues) spans 254-264 (AGYGQGPGGYG). The tract at residues 255–305 (GYGQGPGGYGPQDSYGPQGGYQPDYGQPASGGGGGYGPQGDYGQQGYGQQG) is repeats, Gly-rich. Residues 265 to 282 (PQDSYGPQGGYQPDYGQP) show a composition bias toward low complexity. Y279 and Y296 each carry phosphotyrosine. Residues 283–303 (ASGGGGGYGPQGDYGQQGYGQ) show a composition bias toward gly residues.

It belongs to the synaptophysin/synaptobrevin family. In terms of assembly, homohexamer or homotetramer. Interacts with SRCIN1. Interacts with VAMP2; the interaction is inhibited by interaction of VAPM2 with SEPT8. Ubiquitinated; mediated by SIAH1 or SIAH2 and leading to its subsequent proteasomal degradation. Post-translationally, phosphorylated by SRC.

It is found in the cytoplasmic vesicle. The protein localises to the secretory vesicle. It localises to the synaptic vesicle membrane. The protein resides in the synapse. Its subcellular location is the synaptosome. Its function is as follows. Possibly involved in structural functions as organizing other membrane components or in targeting the vesicles to the plasma membrane. Involved in the regulation of short-term and long-term synaptic plasticity. In Mus musculus (Mouse), this protein is Synaptophysin (Syp).